A 267-amino-acid polypeptide reads, in one-letter code: Neural/ectodermal development factor IMP-L2 (267 aa).

The N-terminal stretch at 1–25 (MEAKMNLHVCALALLLFGSIATVRG) is a signal peptide. Ig-like C2-type domains lie at 48–149 (PRNR…KTIY) and 174–260 (PRII…TFVY). Disulfide bonds link Cys-80-Cys-139 and Cys-195-Cys-244.

As to expression, detected in several sites including the ventral neuroectoderm, the tracheal pits, the pharynx and esophagus, and specific neuronal cell bodies, where it is primarily expressed.

It is found in the secreted. Its subcellular location is the extracellular space. Its function is as follows. Essential developmental role during embryogenesis, in particular the normal development of the nervous system. May be involved in some aspect of cell adhesion. The protein is Neural/ectodermal development factor IMP-L2 (ImpL2) of Drosophila melanogaster (Fruit fly).